The sequence spans 2081 residues: Non-reducing polyketide synthase terA (2081 aa).

The tract at residues 85 to 190 (TLTLAFRIGV…ISLDIFAPFH (106 aa)) is N-terminal acylcarrier protein transacylase (SAT) domain (SAT). Positions 316-749 (AQKIAIVGMA…GGNTGLLLED (434 aa)) constitute a Ketosynthase family 3 (KS3) domain. Catalysis depends on for beta-ketoacyl synthase activity residues Cys-488, His-623, and His-667. Residues 849-1147 (LFTGQGSHYT…LTLPSLRKQE (299 aa)) form a malonyl-CoA:ACP transacylase (MAT) domain region. The tract at residues 1230–1364 (QKVIKEDFGQ…CHVEYGDIKT (135 aa)) is N-terminal hotdog fold. The PKS/mFAS DH domain maps to 1230–1539 (QKVIKEDFGQ…FKAIPRAVIN (310 aa)). Positions 1259 to 1536 (VTGHLVNGSA…GVKFKAIPRA (278 aa)) are product template (PT) domain. The active-site Proton acceptor; for dehydratase activity is His-1262. The segment at 1392–1539 (YQKLDRKAAY…FKAIPRAVIN (148 aa)) is C-terminal hotdog fold. Asp-1452 acts as the Proton donor; for dehydratase activity in catalysis. The disordered stretch occupies residues 1549 to 1578 (KALEKSAPRQNPKATATKTTQKPQAPVPVP). Low complexity predominate over residues 1558–1572 (QNPKATATKTTQKPQ). Residues 1580-1658 (KQNKAIIDDF…QVKELILKLA (79 aa)) form the Carrier 1 domain. Position 1617 is an O-(pantetheine 4'-phosphoryl)serine (Ser-1617). The disordered stretch occupies residues 1659–1700 (GSSSDENTTDTPDEEEDPATADADNTEMIRENPLESVSPNVS). Over residues 1665-1677 (NTTDTPDEEEDPA) the composition is skewed to acidic residues. The Carrier 2 domain occupies 1699 to 1776 (VSSSEAMDGF…QARLAIASLM (78 aa)). Ser-1736 bears the O-(pantetheine 4'-phosphoryl)serine mark. The disordered stretch occupies residues 1783 to 1809 (GATTPYSGSDDAKSSTSSLTAGSVLTP). The thioesterase (TE) domain stretch occupies residues 1840 to 2070 (TLFLLPDGSG…TMMREPKVNQ (231 aa)).

It carries out the reaction 3 malonyl-CoA + acetyl-CoA + 2 H(+) = orsellinate + 3 CO2 + 4 CoA. It functions in the pathway secondary metabolite biosynthesis. Its function is as follows. Non-reducing polyketide synthase; part of the gene cluster that mediates the biosynthesis of terrein, a fungal metabolite with ecological, antimicrobial, antiproliferative, and antioxidative activities. The first step in the pathway is performed by the polyketide synthase terA that produces 4-hydroxy-6-methylpyranon (4-HMP), orsellinic acid (OA), and 2,3-dehydro-6-hydroxymellein (2,3-dehydro-6-HM) by condensing acetyl-CoA with two, three, or four malonyl-CoA units, respectively. 4-HMP and OA are not pathway intermediates, but are rather shunt or side products. 2,3-dehydro-6-HM is further converted to 6-hydroxymellein (6-HM) by the 6-hydroxymellein synthase terB. The monooxygenases terC and terD, the multicopper oxidase terE and the Kelch-like protein terF are then involved in the transformation of 6-HM to terrein. Even if they are co-regulated with the other terrein cluster genes, terH and terI seem to be dispensable for terrein production; whereas one or both of the 2 transporters terG and terJ are probably required for efficient secretion of metabolites. In Aspergillus terreus (strain NIH 2624 / FGSC A1156), this protein is Non-reducing polyketide synthase terA.